Reading from the N-terminus, the 370-residue chain is 4-hydroxy-3-methylbut-2-en-1-yl diphosphate synthase (flavodoxin) (370 aa).

Residues C268, C271, C303, and E310 each contribute to the [4Fe-4S] cluster site.

This sequence belongs to the IspG family. [4Fe-4S] cluster is required as a cofactor.

It catalyses the reaction (2E)-4-hydroxy-3-methylbut-2-enyl diphosphate + oxidized [flavodoxin] + H2O + 2 H(+) = 2-C-methyl-D-erythritol 2,4-cyclic diphosphate + reduced [flavodoxin]. It functions in the pathway isoprenoid biosynthesis; isopentenyl diphosphate biosynthesis via DXP pathway; isopentenyl diphosphate from 1-deoxy-D-xylulose 5-phosphate: step 5/6. Converts 2C-methyl-D-erythritol 2,4-cyclodiphosphate (ME-2,4cPP) into 1-hydroxy-2-methyl-2-(E)-butenyl 4-diphosphate. This Bacillus pumilus (strain SAFR-032) protein is 4-hydroxy-3-methylbut-2-en-1-yl diphosphate synthase (flavodoxin).